The chain runs to 339 residues: Heat-inducible transcription repressor HrcA (339 aa).

This sequence belongs to the HrcA family.

Its function is as follows. Negative regulator of class I heat shock genes (grpE-dnaK-dnaJ and groELS operons). Prevents heat-shock induction of these operons. This is Heat-inducible transcription repressor HrcA from Leifsonia xyli subsp. xyli (strain CTCB07).